Reading from the N-terminus, the 678-residue chain is Penicillin-binding protein activator LpoA (678 aa).

The N-terminal stretch at 1-26 is a signal peptide; it reads MVPSTFSRLKAARCLPVVLAALIFAG. Cys27 is lipidated: N-palmitoyl cysteine. The S-diacylglycerol cysteine moiety is linked to residue Cys27. Over residues 300 to 310 the composition is skewed to low complexity; it reads AADVAEQPQPQ. 2 disordered regions span residues 300-340 and 496-528; these read AADV…PVSA and ALTG…DDQF. Residues 311-327 are compositionally biased toward polar residues; that stretch reads TADSVASPAQASVSDLT. Low complexity-rich tracts occupy residues 330 to 340 and 513 to 528; these read QPAAQPVPVSA and TTNN…DDQF.

The protein belongs to the LpoA family. Interacts with PBP1a.

The protein resides in the cell outer membrane. Regulator of peptidoglycan synthesis that is essential for the function of penicillin-binding protein 1A (PBP1a). The protein is Penicillin-binding protein activator LpoA of Shigella flexneri serotype X (strain 2002017).